A 390-amino-acid polypeptide reads, in one-letter code: Succinyl-diaminopimelate desuccinylase (390 aa).

His-74 lines the Zn(2+) pocket. The active site involves Asp-76. Asp-107 contributes to the Zn(2+) binding site. Glu-140 functions as the Proton acceptor in the catalytic mechanism. The Zn(2+) site is built by Glu-141, Glu-169, and His-363.

The protein belongs to the peptidase M20A family. DapE subfamily. Homodimer. Requires Zn(2+) as cofactor. Co(2+) is required as a cofactor.

The catalysed reaction is N-succinyl-(2S,6S)-2,6-diaminopimelate + H2O = (2S,6S)-2,6-diaminopimelate + succinate. Its pathway is amino-acid biosynthesis; L-lysine biosynthesis via DAP pathway; LL-2,6-diaminopimelate from (S)-tetrahydrodipicolinate (succinylase route): step 3/3. Its function is as follows. Catalyzes the hydrolysis of N-succinyl-L,L-diaminopimelic acid (SDAP), forming succinate and LL-2,6-diaminopimelate (DAP), an intermediate involved in the bacterial biosynthesis of lysine and meso-diaminopimelic acid, an essential component of bacterial cell walls. The chain is Succinyl-diaminopimelate desuccinylase from Bartonella quintana (strain Toulouse) (Rochalimaea quintana).